The primary structure comprises 206 residues: Methyltransferase-like 26 (206 aa).

It belongs to the UPF0585 family.

The protein is Methyltransferase-like 26 of Danio rerio (Zebrafish).